The following is a 437-amino-acid chain: RING finger protein 150 (437 aa).

A signal peptide spans Met-1–Ala-34. Residues Glu-35–Ser-207 lie on the Extracellular side of the membrane. Asn-45, Asn-124, Asn-152, and Asn-185 each carry an N-linked (GlcNAc...) asparagine glycan. A PA domain is found at Ser-80–Leu-182. A helical membrane pass occupies residues Val-208–Phe-228. Residues Tyr-229 to Ser-437 are Cytoplasmic-facing. The segment at Cys-277–Lys-318 adopts an RING-type; atypical zinc-finger fold.

The protein resides in the membrane. The chain is RING finger protein 150 (Rnf150) from Mus musculus (Mouse).